A 509-amino-acid chain; its full sequence is Maturase K (509 aa).

It belongs to the intron maturase 2 family. MatK subfamily.

It localises to the plastid. In terms of biological role, usually encoded in the trnK tRNA gene intron. Probably assists in splicing its own and other chloroplast group II introns. This is Maturase K from Castilleja linariifolia (Wyoming Indian paintbrush).